The primary structure comprises 555 residues: F-box protein COS111 (555 aa).

Disordered regions lie at residues 31 to 82 and 124 to 147; these read MSVS…SVSN and DHSI…KQHH. Low complexity predominate over residues 32–42; that stretch reads SVSSRSSQEES. Over residues 48-61 the composition is skewed to polar residues; it reads ESVSSLSMQEQQTE. The segment covering 129–142 has biased composition (low complexity); it reads SGVTRSTVSTVRPT. In terms of domain architecture, F-box spans 196 to 246; that stretch reads HKDLNSLPHEIMSKIVSHLDQRDVTMCLYVNKNMYSTAVRQLYKEPFFSST. The segment covering 327–346 has biased composition (low complexity); the sequence is SSSSLSCSRTSSNSNSSTES. The interval 327–354 is disordered; the sequence is SSSSLSCSRTSSNSNSSTESKPVKKRRS.

Functionally, F-box protein probably involved in ubiquitin conjugation pathway. The protein is F-box protein COS111 (COS111) of Yarrowia lipolytica (strain CLIB 122 / E 150) (Yeast).